The primary structure comprises 214 residues: Thymidylate kinase (214 aa).

12 to 19 (GLDGSGKS) contacts ATP.

This sequence belongs to the thymidylate kinase family.

The enzyme catalyses dTMP + ATP = dTDP + ADP. Its function is as follows. Phosphorylation of dTMP to form dTDP in both de novo and salvage pathways of dTTP synthesis. The chain is Thymidylate kinase from Bdellovibrio bacteriovorus (strain ATCC 15356 / DSM 50701 / NCIMB 9529 / HD100).